The sequence spans 191 residues: Protein Ves (191 aa).

Belongs to the Ves family.

The protein is Protein Ves of Escherichia coli O7:K1 (strain IAI39 / ExPEC).